Consider the following 692-residue polypeptide: Methionine--tRNA ligase (692 aa).

Residues 12-22 carry the 'HIGH' region motif; sequence PYANGPLHLGH. Positions 143, 146, 156, and 159 each coordinate Zn(2+). A 'KMSKS' region motif is present at residues 330–334; it reads KMSKS. Residue K333 coordinates ATP. The span at 554–563 shows a compositional bias: low complexity; the sequence is AAAAPAAKPA. Residues 554 to 575 are disordered; it reads AAAAPAAKPAAPAPAPAPAKDE. Residues 589-692 form the tRNA-binding domain; sequence DFAKLDLRIG…SGAQPGMPVR (104 aa).

Belongs to the class-I aminoacyl-tRNA synthetase family. MetG type 1 subfamily. In terms of assembly, homodimer. Requires Zn(2+) as cofactor.

It is found in the cytoplasm. The enzyme catalyses tRNA(Met) + L-methionine + ATP = L-methionyl-tRNA(Met) + AMP + diphosphate. Its function is as follows. Is required not only for elongation of protein synthesis but also for the initiation of all mRNA translation through initiator tRNA(fMet) aminoacylation. The protein is Methionine--tRNA ligase of Stenotrophomonas maltophilia (strain K279a).